We begin with the raw amino-acid sequence, 494 residues long: Tyrosinase (494 aa).

Residues H38, H53, C64, H224, H228, and H256 each contribute to the Cu cation site.

This sequence belongs to the tyrosinase family. It depends on Cu(2+) as a cofactor.

The catalysed reaction is 2 L-dopa + O2 = 2 L-dopaquinone + 2 H2O. It carries out the reaction L-tyrosine + O2 = L-dopaquinone + H2O. The chain is Tyrosinase (mepA) from Rhizobium meliloti (Ensifer meliloti).